Here is a 165-residue protein sequence, read N- to C-terminus: Protein SprT (165 aa).

The region spanning 20–163 (EKLAQANLKL…RCVHCGEQLV (144 aa)) is the SprT-like domain. A Zn(2+)-binding site is contributed by histidine 78. The active site involves glutamate 79. Zn(2+) is bound at residue histidine 82.

Belongs to the SprT family. The cofactor is Zn(2+).

The protein localises to the cytoplasm. The sequence is that of Protein SprT from Escherichia coli (strain K12 / MC4100 / BW2952).